Reading from the N-terminus, the 237-residue chain is Uridylate kinase (237 aa).

Residue 12–15 (KLSG) coordinates ATP. The tract at residues 20–25 (GEDGLG) is involved in allosteric activation by GTP. Residue glycine 54 participates in UMP binding. ATP-binding residues include glycine 55 and arginine 59. Residues aspartate 74 and 135–142 (TGNPFFTT) contribute to the UMP site. ATP contacts are provided by threonine 162, tyrosine 168, and aspartate 171.

This sequence belongs to the UMP kinase family. Homohexamer.

It is found in the cytoplasm. It carries out the reaction UMP + ATP = UDP + ADP. It functions in the pathway pyrimidine metabolism; CTP biosynthesis via de novo pathway; UDP from UMP (UMPK route): step 1/1. With respect to regulation, allosterically activated by GTP. Inhibited by UTP. Functionally, catalyzes the reversible phosphorylation of UMP to UDP. This chain is Uridylate kinase, found in Haemophilus influenzae (strain PittEE).